We begin with the raw amino-acid sequence, 146 residues long: uncharacterized protein (146 aa).

The 140-residue stretch at 7–146 (LEINYKTDEL…EGHDVLLWKP (140 aa)) folds into the N-acetyltransferase domain.

This is an uncharacterized protein from Staphylococcus aureus (strain COL).